The primary structure comprises 157 residues: Protein Smg homolog (157 aa).

Belongs to the Smg family.

The chain is Protein Smg homolog from Shewanella woodyi (strain ATCC 51908 / MS32).